The chain runs to 296 residues: Probable endonuclease 4 (296 aa).

Positions 68, 108, 145, 179, 182, 216, 229, 231, and 261 each coordinate Zn(2+).

Belongs to the AP endonuclease 2 family. Zn(2+) is required as a cofactor.

The catalysed reaction is Endonucleolytic cleavage to 5'-phosphooligonucleotide end-products.. Endonuclease IV plays a role in DNA repair. It cleaves phosphodiester bonds at apurinic or apyrimidinic (AP) sites, generating a 3'-hydroxyl group and a 5'-terminal sugar phosphate. The protein is Probable endonuclease 4 of Geobacter sulfurreducens (strain ATCC 51573 / DSM 12127 / PCA).